Reading from the N-terminus, the 1505-residue chain is G patch domain-containing protein 8 (1505 aa).

The 47-residue stretch at 40-86 (SDNIGHRLLQKHGWKLGQGLGKSLQGRTDPIPIVVKYDVMGMGRMEM) folds into the G-patch domain. Residues 89-124 (DYAEDATERRRVLEVEKEDTEELRQKYKDYVDKEKA) are a coiled coil. A C2H2-type zinc finger spans residues 136–160 (FYCELCDKQYQKHQEFDNHINSYDH). Composition is skewed to basic and acidic residues over residues 166–175 (LKDLKQREFA) and 182–206 (SRKDEKKQEKALRRLHELAEQRKQA). Positions 166-244 (LKDLKQREFA…SSTNSGASAV (79 aa)) are disordered. Acidic residues predominate over residues 223-233 (VDEDGGEEDKD). A Glycyl lysine isopeptide (Lys-Gly) (interchain with G-Cter in SUMO2) cross-link involves residue K311. 2 stretches are compositionally biased toward basic and acidic residues: residues 322–339 (HAEEGSSEDGTKADEKSS) and 421–436 (EGDHSAHSKSAPENRK). Disordered regions lie at residues 322-393 (HAEE…EPEY) and 419-537 (QMEG…FPVL). Polar residues predominate over residues 437–449 (SSSPKPQGCSKTA). Residue K479 is modified to N6-acetyllysine. Residue K573 forms a Glycyl lysine isopeptide (Lys-Gly) (interchain with G-Cter in SUMO2) linkage. 2 stretches are compositionally biased toward basic and acidic residues: residues 575–612 (SRNKDAKAKGTEKPKDVAGSSKDHLQSLDPREPNKSQE) and 648–665 (SETEDTGRSHPSKKEPSG). Residues 575-1304 (SRNKDAKAKG…ESTDGTEDAS (730 aa)) are disordered. Position 648 is a phosphoserine (S648). Basic residues predominate over residues 666–687 (KSHRHKKKKKHKKSSKHKRKHK). Residues 688-702 (ADTEEKSSKAESGEK) are compositionally biased toward basic and acidic residues. Over residues 703–715 (SKKRKKRKRKKNK) the composition is skewed to basic residues. 3 positions are modified to phosphoserine: S733, S735, and S753. Over residues 745-767 (AQDDSQRRSLPAEEGNSGKKDDG) the composition is skewed to basic and acidic residues. The span at 794–804 (ANTKHSSRSSH) shows a compositional bias: basic residues. Acidic residues predominate over residues 832-849 (SEEEEEEEEEEEEEDEDS). The span at 856–871 (SRSRSGHRHSSHRSSR) shows a compositional bias: basic residues. Low complexity predominate over residues 872–900 (RSYSSSSDASSDQSCYSRQHSYSDDSYSD). Phosphoserine is present on residues S915 and S918. The span at 923-932 (SKHRSKRHKY) shows a compositional bias: basic residues. 5 positions are modified to phosphoserine: S985, S1013, S1018, S1037, and S1039. Residues 1017–1031 (ESPEERRSGRRDFIR) are compositionally biased toward basic and acidic residues. The segment covering 1050-1063 (GPGKKEDGRGDDSK) has biased composition (basic and acidic residues). Phosphoserine is present on S1085. Composition is skewed to basic and acidic residues over residues 1097-1112 (LLEKIQSRKVERKPNV), 1163-1185 (KKCEESGLERGEEQEHSEPEEGS), and 1211-1220 (EEPKSEEATA). K1109 is covalently cross-linked (Glycyl lysine isopeptide (Lys-Gly) (interchain with G-Cter in SUMO2)). The residue at position 1179 (S1179) is a Phosphoserine.

The chain is G patch domain-containing protein 8 (Gpatch8) from Mus musculus (Mouse).